A 120-amino-acid polypeptide reads, in one-letter code: NAD(P)H-quinone oxidoreductase subunit 3 (120 aa).

A run of 3 helical transmembrane segments spans residues 1–21, 64–84, and 89–109; these read MFVL…SLVP, MFAL…PWAV, and LGLL…VALV.

The protein belongs to the complex I subunit 3 family. In terms of assembly, NDH-1 can be composed of about 15 different subunits; different subcomplexes with different compositions have been identified which probably have different functions.

It is found in the cellular thylakoid membrane. It carries out the reaction a plastoquinone + NADH + (n+1) H(+)(in) = a plastoquinol + NAD(+) + n H(+)(out). The catalysed reaction is a plastoquinone + NADPH + (n+1) H(+)(in) = a plastoquinol + NADP(+) + n H(+)(out). Functionally, NDH-1 shuttles electrons from an unknown electron donor, via FMN and iron-sulfur (Fe-S) centers, to quinones in the respiratory and/or the photosynthetic chain. The immediate electron acceptor for the enzyme in this species is believed to be plastoquinone. Couples the redox reaction to proton translocation, and thus conserves the redox energy in a proton gradient. Cyanobacterial NDH-1 also plays a role in inorganic carbon-concentration. This chain is NAD(P)H-quinone oxidoreductase subunit 3, found in Nostoc punctiforme (strain ATCC 29133 / PCC 73102).